The following is a 348-amino-acid chain: N-formyl peptide receptor 2 (348 aa).

A glycan (N-linked (GlcNAc...) asparagine) is linked at Asn-1. At 1–24 (NFSTPLNEHEEVSYESAGYTVLRI) the chain is on the extracellular side. The helical transmembrane segment at 25–47 (LPLVVLGVTFVLGVLGNGLVIWV) threads the bilayer. Over 48–58 (AGFRMTRTVTT) the chain is Cytoplasmic. Residues 59–80 (ICYLNLALADFSFTATLPFLIV) traverse the membrane as a helical segment. The Extracellular segment spans residues 81 to 97 (SMAMGEKWPFGWFLCKL). Cys-95 and Cys-173 are joined by a disulfide. A helical transmembrane segment spans residues 98-118 (IHIVVDINLFGSVFLIGFIAL). Residues 119 to 137 (DRCICVLHPVWAQNHRTVS) lie on the Cytoplasmic side of the membrane. The helical transmembrane segment at 138–159 (LAMKVIVGPWILALVLTLPVFL) threads the bilayer. The Extracellular portion of the chain corresponds to 160–202 (FLTTVTIPNGDTYCTFNFASWGGTPEERQKVAITMLTARGIIR). The chain crosses the membrane as a helical span at residues 203-223 (FVIGFSLPMSIVAICYGLIAA). Over 224 to 239 (KIHKKGMIKSSRPLRV) the chain is Cytoplasmic. A helical membrane pass occupies residues 240–263 (LTAVVASFFICWFPFQLVALLGTV). Topologically, residues 264 to 283 (WLKEMLFYGKYKIIDILVNP) are extracellular. The helical transmembrane segment at 284 to 303 (TSSLAFFNSCLNPMLYVFVG) threads the bilayer. Over 304 to 348 (QDFRERLIHSLPTSLERALSEDSAPTNDTAASCASPPAETELQAM) the chain is Cytoplasmic. Positions 323-348 (SEDSAPTNDTAASCASPPAETELQAM) are disordered. Positions 326–335 (SAPTNDTAAS) are enriched in polar residues.

Belongs to the G-protein coupled receptor 1 family. In terms of assembly, interacts with APP; the interaction takes place at the cell surface and the complex is then rapidly internalized.

Its subcellular location is the cell membrane. Its function is as follows. Low affinity receptor for N-formyl-methionyl peptides, which are powerful neutrophil chemotactic factors. Binding of FMLP to the receptor causes activation of neutrophils. This response is mediated via a G-protein that activates a phosphatidylinositol-calcium second messenger system. Receptor for the chemokine-like protein FAM19A5, mediating FAM19A5-stimulated macrophage chemotaxis and the inhibitory effect on TNFSF11/RANKL-induced osteoclast differentiation. This Gorilla gorilla gorilla (Western lowland gorilla) protein is N-formyl peptide receptor 2 (FPR2).